A 296-amino-acid polypeptide reads, in one-letter code: Glycine N-acyltransferase-like protein (296 aa).

At Lys41 the chain carries N6-acetyllysine; alternate. Lys41 carries the post-translational modification N6-succinyllysine; alternate. Lys43 is subject to N6-acetyllysine. Residue Lys48 is modified to N6-acetyllysine; alternate. Lys48 bears the N6-succinyllysine; alternate mark. An N6-acetyllysine mark is found at Lys80 and Lys83. N6-acetyllysine; alternate occurs at positions 183 and 256. Lys183 and Lys256 each carry N6-succinyllysine; alternate.

Belongs to the glycine N-acyltransferase family.

The protein localises to the mitochondrion. The enzyme catalyses an acyl-CoA + glycine = an N-acylglycine + CoA + H(+). Functionally, mitochondrial acyltransferase which transfers the acyl group to the N-terminus of glycine. Can conjugate a multitude of substrates to form a variety of N-acylglycines. The protein is Glycine N-acyltransferase-like protein (Gm4952) of Mus musculus (Mouse).